Consider the following 169-residue polypeptide: MKPSSSNSRSKGHAKARRKTREELDQEARDRKRQKKRRGHAPGSRAAGGNTTSGSKGQNAPKDPRIGSKTPIPLGVTEKVTKQHKPKSEKPMLSPQAELELLETDERLDALLERLEAGETLSAEEQSWVDAKLDRIDELMQKLGLSYDDDEEEEEDEKQEDMMRLLRGN.

Disordered stretches follow at residues 1 to 98 (MKPS…PQAE) and 144 to 169 (GLSY…LRGN). A compositionally biased stretch (basic residues) spans 10–19 (SKGHAKARRK). A compositionally biased stretch (basic and acidic residues) spans 20–30 (TREELDQEARD). Positions 31 to 40 (RKRQKKRRGH) are enriched in basic residues. The span at 49 to 58 (GNTTSGSKGQ) shows a compositional bias: polar residues. Over residues 147–159 (YDDDEEEEEDEKQ) the composition is skewed to acidic residues. The segment covering 160-169 (EDMMRLLRGN) has biased composition (basic and acidic residues).

Belongs to the YihI family. Interacts with Der.

A GTPase-activating protein (GAP) that modifies Der/EngA GTPase function. May play a role in ribosome biogenesis. The protein is Der GTPase-activating protein YihI of Escherichia coli O139:H28 (strain E24377A / ETEC).